The following is a 130-amino-acid chain: MIYGIGTDICDLRRIAATFERQGERFAHRVLSDAEFAVWKARSERWPKRGLSYLATRFSAKEAFSKAIGLGMRMPMSWRLCEIANLRSGKPVIVLHGELKEWFEARGLTAHVTVTDETEYAASFVVVEKL.

Residues D8 and E62 each contribute to the Mg(2+) site.

Belongs to the P-Pant transferase superfamily. AcpS family. It depends on Mg(2+) as a cofactor.

It localises to the cytoplasm. The catalysed reaction is apo-[ACP] + CoA = holo-[ACP] + adenosine 3',5'-bisphosphate + H(+). In terms of biological role, transfers the 4'-phosphopantetheine moiety from coenzyme A to a Ser of acyl-carrier-protein. This Variovorax paradoxus (strain S110) protein is Holo-[acyl-carrier-protein] synthase.